The primary structure comprises 74 residues: CLAVATA3/ESR (CLE)-related protein 1 (74 aa).

The first 22 residues, 1–22 (MANLKFLLCLFLICVSLSRSSA), serve as a signal peptide directing secretion. N-linked (GlcNAc...) asparagine glycosylation occurs at N59. 2 positions are modified to hydroxyproline: P66 and P69. O-linked (Ara...) hydroxyproline glycosylation occurs at P69.

It belongs to the CLV3/ESR signal peptide family. Post-translationally, the O-glycosylation (arabinosylation) of the hydroxyproline Pro-69 enhances binding affinity of the CLE1p peptide for its receptor. Mostly expressed in roots and seedlings, and, to a lower extent, in stems and apex.

It localises to the secreted. Its subcellular location is the extracellular space. Functionally, extracellular signal peptide that regulates cell fate. This Arabidopsis thaliana (Mouse-ear cress) protein is CLAVATA3/ESR (CLE)-related protein 1.